Here is a 177-residue protein sequence, read N- to C-terminus: Ribosome maturation factor RimP (177 aa).

Belongs to the RimP family.

The protein localises to the cytoplasm. Its function is as follows. Required for maturation of 30S ribosomal subunits. In Mycobacterium marinum (strain ATCC BAA-535 / M), this protein is Ribosome maturation factor RimP.